The primary structure comprises 217 residues: MAWAISGLLVILGYLLGSIPTGYLMVRALKGIDIREQGSGSTGATNVLRTVGKTAAIAVLIIDMLKAMVAVGGVKLLYFGVPSAIVPLDWKPWLIVTVASAAILGHSKSIFLNFTGGKSVASSLGVLLVLNPLVALGALASFLFMLGITRIVSLSSITGAIAVNLLMLVLHQPLAYILFAILAGIYVIVRHKTNISRILQGTEPKIGQKLTEEAETV.

A run of 5 helical transmembrane segments spans residues M1–T21, T54–V74, A84–L104, V126–L146, and L165–I185.

This sequence belongs to the PlsY family. As to quaternary structure, probably interacts with PlsX.

Its subcellular location is the cell inner membrane. The enzyme catalyses an acyl phosphate + sn-glycerol 3-phosphate = a 1-acyl-sn-glycero-3-phosphate + phosphate. It participates in lipid metabolism; phospholipid metabolism. Its function is as follows. Catalyzes the transfer of an acyl group from acyl-phosphate (acyl-PO(4)) to glycerol-3-phosphate (G3P) to form lysophosphatidic acid (LPA). This enzyme utilizes acyl-phosphate as fatty acyl donor, but not acyl-CoA or acyl-ACP. In Rippkaea orientalis (strain PCC 8801 / RF-1) (Cyanothece sp. (strain PCC 8801)), this protein is Glycerol-3-phosphate acyltransferase.